Here is a 29-residue protein sequence, read N- to C-terminus: Varv peptide D (29 aa).

The cyclopeptide (Gly-Asn) cross-link spans 1–29; the sequence is GLPICGETCVGGSCNTPGCSCSWPVCTRN. 3 disulfides stabilise this stretch: Cys-5/Cys-19, Cys-9/Cys-21, and Cys-14/Cys-26.

In terms of processing, this is a cyclic peptide.

In terms of biological role, probably participates in a plant defense mechanism. This Viola arvensis (European field pansy) protein is Varv peptide D.